The primary structure comprises 79 residues: Sulfur carrier protein TusA (79 aa).

The active-site Cysteine persulfide intermediate is the cysteine 17.

Belongs to the sulfur carrier protein TusA family.

Its subcellular location is the cytoplasm. Sulfur carrier protein which probably makes part of a sulfur-relay system. This chain is Sulfur carrier protein TusA, found in Mannheimia succiniciproducens (strain KCTC 0769BP / MBEL55E).